The chain runs to 113 residues: MNILDKVDSAYLRDDVPAFRPGDTLDVHVKVIEGTNTRTQLFKGVVIRRQGSGIRETFTVRKVSFGIGVERTFPVHSPNLEKIEVVRRGDVRRAKLYYLRELRGKAARIKEKR.

The protein belongs to the bacterial ribosomal protein bL19 family.

In terms of biological role, this protein is located at the 30S-50S ribosomal subunit interface and may play a role in the structure and function of the aminoacyl-tRNA binding site. The sequence is that of Large ribosomal subunit protein bL19 from Corynebacterium efficiens (strain DSM 44549 / YS-314 / AJ 12310 / JCM 11189 / NBRC 100395).